The chain runs to 207 residues: Large ribosomal subunit protein uL4 (207 aa).

Positions threonine 48–isoleucine 78 are disordered. Positions glycine 60–glycine 71 are enriched in basic residues.

The protein belongs to the universal ribosomal protein uL4 family. As to quaternary structure, part of the 50S ribosomal subunit.

In terms of biological role, one of the primary rRNA binding proteins, this protein initially binds near the 5'-end of the 23S rRNA. It is important during the early stages of 50S assembly. It makes multiple contacts with different domains of the 23S rRNA in the assembled 50S subunit and ribosome. Forms part of the polypeptide exit tunnel. This chain is Large ribosomal subunit protein uL4, found in Bacillus pumilus (strain SAFR-032).